The sequence spans 197 residues: MKVLQEKILNEGKVLSGDVLKVDAFLNHQIDPVLMQEIGKEFAKRFKEENITKIVTIESSGIAPAVMAALELGVKVIFARKRKSLTLQDNMYVANVYSFTKQETNEISLSRNHIDESDRVLIIDDFLANGQAALGLMSLVEQAGASIAGIGIVIEKAFQDGGKKLREQGIRVESLAEIASLDNNAVTFVQQETAEVK.

The xanthine site is built by Leu-20 and Asn-27. 128–132 (ANGQA) provides a ligand contact to 5-phospho-alpha-D-ribose 1-diphosphate. Lys-156 is a binding site for xanthine.

Belongs to the purine/pyrimidine phosphoribosyltransferase family. Xpt subfamily. In terms of assembly, homodimer.

The protein resides in the cytoplasm. The enzyme catalyses XMP + diphosphate = xanthine + 5-phospho-alpha-D-ribose 1-diphosphate. It functions in the pathway purine metabolism; XMP biosynthesis via salvage pathway; XMP from xanthine: step 1/1. In terms of biological role, converts the preformed base xanthine, a product of nucleic acid breakdown, to xanthosine 5'-monophosphate (XMP), so it can be reused for RNA or DNA synthesis. This chain is Xanthine phosphoribosyltransferase, found in Bacillus anthracis (strain A0248).